The following is a 138-amino-acid chain: Rapid alkalinization factor 23 (138 aa).

Residues 1 to 28 (MRGLSRNSGAAAIFAILLILAVHNWSVA) form the signal peptide. A propeptide spans 29 to 88 (VSSQSTEFAGDFPPFETECRGTIAECSVSAALGDGGDLFYGGGEMGEEFEMDSEINRRIL) (removed in mature form). Disulfide bonds link cysteine 106–cysteine 116 and cysteine 129–cysteine 135.

This sequence belongs to the plant rapid alkalinization factor (RALF) family. Proteolytically cleaved, probably by SBT6.1 (S1P), a subtilisin-like serine protease (subtilase).

It is found in the secreted. Cell signaling peptide that may regulate plant stress, growth, and development. Mediates a rapid alkalinization of extracellular space by mediating a transient increase in the cytoplasmic Ca(2+) concentration leading to a calcium-dependent signaling events through a cell surface receptor and a concomitant activation of some intracellular mitogen-activated protein kinases. Negatively regulates brassinolide (BL)-mediated signaling pathway (e.g. BL-induced hypocotyl elongation and branching limitation). The chain is Rapid alkalinization factor 23 (RALF23) from Arabidopsis thaliana (Mouse-ear cress).